A 242-amino-acid chain; its full sequence is MSIVNIAAYKFVSLPDTVLLREALQERADALGLKGTILLAPEGINLFLAGSGEAIEAFLAGLRADARFADIEVKYSTSADVPFGKMRVRLKREIIRMNHPAIRPEAGRAPSVNAHTLARWLEQGRDDDGREVVMLDTRNAFEVDVGTFRNAIDWRIDRFTQFPDAVREHRAELEGKTVVSFCTGGIRCEKAAIFMEDIGIAHVYQLEGGILKYFEETGGPGYDGACFVFDERHALDPALKPV.

Residues aspartate 128–tyrosine 222 enclose the Rhodanese domain. Cysteine 182 (cysteine persulfide intermediate) is an active-site residue.

It belongs to the TrhO family.

It carries out the reaction uridine(34) in tRNA + AH2 + O2 = 5-hydroxyuridine(34) in tRNA + A + H2O. Functionally, catalyzes oxygen-dependent 5-hydroxyuridine (ho5U) modification at position 34 in tRNAs. This chain is tRNA uridine(34) hydroxylase, found in Bordetella avium (strain 197N).